The chain runs to 380 residues: Queuine tRNA-ribosyltransferase (380 aa).

The active-site Proton acceptor is aspartate 96. Residues 96-100 (DSGGF), aspartate 150, glutamine 193, and glycine 220 contribute to the substrate site. Residues 251–257 (GVGAPDS) form an RNA binding region. Residue aspartate 270 is the Nucleophile of the active site. The interval 275–279 (TRIAR) is RNA binding; important for wobble base 34 recognition. The Zn(2+) site is built by cysteine 308, cysteine 310, cysteine 313, and histidine 339.

Belongs to the queuine tRNA-ribosyltransferase family. In terms of assembly, homodimer. Within each dimer, one monomer is responsible for RNA recognition and catalysis, while the other monomer binds to the replacement base PreQ1. Zn(2+) serves as cofactor.

The catalysed reaction is 7-aminomethyl-7-carbaguanine + guanosine(34) in tRNA = 7-aminomethyl-7-carbaguanosine(34) in tRNA + guanine. It participates in tRNA modification; tRNA-queuosine biosynthesis. Catalyzes the base-exchange of a guanine (G) residue with the queuine precursor 7-aminomethyl-7-deazaguanine (PreQ1) at position 34 (anticodon wobble position) in tRNAs with GU(N) anticodons (tRNA-Asp, -Asn, -His and -Tyr). Catalysis occurs through a double-displacement mechanism. The nucleophile active site attacks the C1' of nucleotide 34 to detach the guanine base from the RNA, forming a covalent enzyme-RNA intermediate. The proton acceptor active site deprotonates the incoming PreQ1, allowing a nucleophilic attack on the C1' of the ribose to form the product. After dissociation, two additional enzymatic reactions on the tRNA convert PreQ1 to queuine (Q), resulting in the hypermodified nucleoside queuosine (7-(((4,5-cis-dihydroxy-2-cyclopenten-1-yl)amino)methyl)-7-deazaguanosine). This chain is Queuine tRNA-ribosyltransferase, found in Streptococcus pyogenes serotype M49 (strain NZ131).